A 248-amino-acid chain; its full sequence is Large ribosomal subunit protein bL9m (248 aa).

The transit peptide at 1-25 (MLKNIYVTPLNLLKSATSLQQQVRT) directs the protein to the mitochondrion.

Belongs to the bacterial ribosomal protein bL9 family. Component of the mitochondrial ribosome large subunit (39S) which comprises a 16S rRNA and about 50 distinct proteins.

The protein localises to the mitochondrion. The protein is Large ribosomal subunit protein bL9m (mRpL9) of Drosophila melanogaster (Fruit fly).